The following is a 352-amino-acid chain: Holliday junction branch migration complex subunit RuvB (352 aa).

Residues 5 to 191 form a large ATPase domain (RuvB-L) region; it reads TDDFSEQRII…FGIVARLEFY (187 aa). ATP-binding positions include Leu-30, Arg-31, Gly-72, Lys-75, Thr-76, Thr-77, 138–140, Arg-181, Tyr-191, and Arg-228; that span reads EDY. Residue Thr-76 participates in Mg(2+) binding. Positions 192 to 262 are small ATPAse domain (RuvB-S); it reads TPLELTKIVT…MADAALVMLD (71 aa). The head domain (RuvB-H) stretch occupies residues 265–352; the sequence is PVGFDLMDRK…GPNGDLWAGQ (88 aa). Positions 301, 320, and 325 each coordinate DNA.

The protein belongs to the RuvB family. Homohexamer. Forms an RuvA(8)-RuvB(12)-Holliday junction (HJ) complex. HJ DNA is sandwiched between 2 RuvA tetramers; dsDNA enters through RuvA and exits via RuvB. An RuvB hexamer assembles on each DNA strand where it exits the tetramer. Each RuvB hexamer is contacted by two RuvA subunits (via domain III) on 2 adjacent RuvB subunits; this complex drives branch migration. In the full resolvosome a probable DNA-RuvA(4)-RuvB(12)-RuvC(2) complex forms which resolves the HJ.

It localises to the cytoplasm. It carries out the reaction ATP + H2O = ADP + phosphate + H(+). Functionally, the RuvA-RuvB-RuvC complex processes Holliday junction (HJ) DNA during genetic recombination and DNA repair, while the RuvA-RuvB complex plays an important role in the rescue of blocked DNA replication forks via replication fork reversal (RFR). RuvA specifically binds to HJ cruciform DNA, conferring on it an open structure. The RuvB hexamer acts as an ATP-dependent pump, pulling dsDNA into and through the RuvAB complex. RuvB forms 2 homohexamers on either side of HJ DNA bound by 1 or 2 RuvA tetramers; 4 subunits per hexamer contact DNA at a time. Coordinated motions by a converter formed by DNA-disengaged RuvB subunits stimulates ATP hydrolysis and nucleotide exchange. Immobilization of the converter enables RuvB to convert the ATP-contained energy into a lever motion, pulling 2 nucleotides of DNA out of the RuvA tetramer per ATP hydrolyzed, thus driving DNA branch migration. The RuvB motors rotate together with the DNA substrate, which together with the progressing nucleotide cycle form the mechanistic basis for DNA recombination by continuous HJ branch migration. Branch migration allows RuvC to scan DNA until it finds its consensus sequence, where it cleaves and resolves cruciform DNA. The polypeptide is Holliday junction branch migration complex subunit RuvB (Janthinobacterium sp. (strain Marseille) (Minibacterium massiliensis)).